A 309-amino-acid polypeptide reads, in one-letter code: Homoserine O-succinyltransferase (309 aa).

Cys142 (acyl-thioester intermediate) is an active-site residue. Positions 163 and 192 each coordinate substrate. Residue His235 is the Proton acceptor of the active site. Glu237 is an active-site residue. Arg249 provides a ligand contact to substrate.

The protein belongs to the MetA family. In terms of assembly, homodimer.

It localises to the cytoplasm. It carries out the reaction L-homoserine + succinyl-CoA = O-succinyl-L-homoserine + CoA. It functions in the pathway amino-acid biosynthesis; L-methionine biosynthesis via de novo pathway; O-succinyl-L-homoserine from L-homoserine: step 1/1. Functionally, transfers a succinyl group from succinyl-CoA to L-homoserine, forming succinyl-L-homoserine. The protein is Homoserine O-succinyltransferase of Salmonella arizonae (strain ATCC BAA-731 / CDC346-86 / RSK2980).